A 322-amino-acid chain; its full sequence is uncharacterized protein (322 aa).

4 helical membrane passes run 24 to 44 (LLHLQNFASAGIITILCIQIT), 68 to 88 (LFFELIGYHPFVIGALLLIFI), 100 to 120 (IVTSSVIILHLYMSGGITPTF), and 125 to 145 (VQLITVGIGVALLMNLYMPSL).

It localises to the cell membrane. This is an uncharacterized protein from Bacillus subtilis (strain 168).